The following is a 496-amino-acid chain: Adenosine transporter 1 (496 aa).

Residues 1 to 26 (MSSHTSTPNHASAAPPRKWYDMTSAE) lie on the Cytoplasmic side of the membrane. Residues 27–47 (FYVYVVAFMCGISMLMPINAV) traverse the membrane as a helical segment. The Extracellular portion of the chain corresponds to 48–77 (FSAPSYMLQYYLYATKDPNHVPQMTNFWSN). The chain crosses the membrane as a helical span at residues 78-98 (VMTYYNLIGLVTGLVMEPLTL). The Cytoplasmic portion of the chain corresponds to 99–107 (LKSFRKIPM). The chain crosses the membrane as a helical span at residues 108–128 (LVRLLGGLCILIVEIIVLMAV). The Extracellular portion of the chain corresponds to 129–135 (PARGTTE). The chain crosses the membrane as a helical span at residues 136 to 156 (GGAVATMCIAGFIGGLGKSIF). Residues 157–172 (ESTVYGMFGAFPPSFT) lie on the Cytoplasmic side of the membrane. Residues 173–193 (SIMMGGVGISGVLTSLIQIIV) form a helical membrane-spanning segment. The Extracellular portion of the chain corresponds to 194–208 (KAALPDTYEGVKKQS). A helical membrane pass occupies residues 209-229 (YIYYSLDVGIQAATFIALIMM). Residues 230–336 (RFNSFAQLHF…SIISVLRSIK (107 aa)) are Cytoplasmic-facing. A helical transmembrane segment spans residues 337-357 (WMFVSCAFVFVVTLFLFPGIA). Over 358 to 365 (TGMFPESK) the chain is Extracellular. Residues 366–386 (WFATVAVFIFNCCDVLGRVAP) form a helical membrane-spanning segment. At 387–399 (ALRFMWPRSYNQR) the chain is on the cytoplasmic side. Residues 400–420 (WIIVAASFARVIFVPLLLLYS) traverse the membrane as a helical segment. Over 421–431 (YHYIPSEAYGY) the chain is Extracellular. Residues 432–452 (VIMVIFGFSSGYVASMSLTLG) traverse the membrane as a helical segment. Residues 453–464 (PQSKGIDNDGKR) lie on the Cytoplasmic side of the membrane. The helical transmembrane segment at 465-485 (FVAGTLMGISILVGGTIGTVL) threads the bilayer. At 486–496 (SIMTQTIREKY) the chain is on the extracellular side.

This sequence belongs to the SLC29A/ENT transporter (TC 2.A.57) family.

The protein resides in the membrane. It carries out the reaction adenosine(in) = adenosine(out). Its function is as follows. Adenosine transporter. This chain is Adenosine transporter 1, found in Crithidia fasciculata.